The primary structure comprises 567 residues: Urease subunit alpha (567 aa).

The Urease domain maps to 130–567; it reads GGIDTHIHFI…LPLAQRYFLF (438 aa). Residues H135, H137, and K218 each coordinate Ni(2+). N6-carboxylysine is present on K218. H220 contributes to the substrate binding site. Ni(2+) is bound by residues H247 and H273. The Proton donor role is filled by H321. Residue D361 participates in Ni(2+) binding.

This sequence belongs to the metallo-dependent hydrolases superfamily. Urease alpha subunit family. In terms of assembly, heterotrimer of UreA (gamma), UreB (beta) and UreC (alpha) subunits. Three heterotrimers associate to form the active enzyme. It depends on Ni cation as a cofactor. Post-translationally, carboxylation allows a single lysine to coordinate two nickel ions.

Its subcellular location is the cytoplasm. It catalyses the reaction urea + 2 H2O + H(+) = hydrogencarbonate + 2 NH4(+). It functions in the pathway nitrogen metabolism; urea degradation; CO(2) and NH(3) from urea (urease route): step 1/1. This Methylobacillus flagellatus (strain ATCC 51484 / DSM 6875 / VKM B-1610 / KT) protein is Urease subunit alpha.